The following is a 1225-amino-acid chain: uncharacterized protein (1225 aa).

An N-terminal signal peptide occupies residues 1–27 (MKRFLHRVKWPLLLSSIAVSLGIVAVA). Cysteine 28 is lipidated: N-palmitoyl cysteine. Cysteine 28 carries S-diacylglycerol cysteine lipidation. The interval 995 to 1014 (QSEKSSSNGGQAQLQSTQSS) is disordered.

Belongs to the MG307/MG309/MG338 family.

The protein localises to the cell membrane. This is an uncharacterized protein from Mycoplasma genitalium (strain ATCC 33530 / DSM 19775 / NCTC 10195 / G37) (Mycoplasmoides genitalium).